The primary structure comprises 334 residues: tRNA N6-adenosine threonylcarbamoyltransferase (334 aa).

Fe cation-binding residues include His107 and His111. Residues 129-133 (LVSGG), Asp162, Gly175, and Asn269 contribute to the substrate site. Residue Asp297 coordinates Fe cation.

This sequence belongs to the KAE1 / TsaD family. It depends on Fe(2+) as a cofactor.

The protein resides in the cytoplasm. The enzyme catalyses L-threonylcarbamoyladenylate + adenosine(37) in tRNA = N(6)-L-threonylcarbamoyladenosine(37) in tRNA + AMP + H(+). In terms of biological role, required for the formation of a threonylcarbamoyl group on adenosine at position 37 (t(6)A37) in tRNAs that read codons beginning with adenine. Is involved in the transfer of the threonylcarbamoyl moiety of threonylcarbamoyl-AMP (TC-AMP) to the N6 group of A37, together with TsaE and TsaB. TsaD likely plays a direct catalytic role in this reaction. This is tRNA N6-adenosine threonylcarbamoyltransferase from Campylobacter concisus (strain 13826).